The chain runs to 158 residues: NAD(P)H-quinone oxidoreductase subunit N (158 aa).

This sequence belongs to the complex I NdhN subunit family. As to quaternary structure, NDH-1 can be composed of about 15 different subunits; different subcomplexes with different compositions have been identified which probably have different functions.

It is found in the cellular thylakoid membrane. The enzyme catalyses a plastoquinone + NADH + (n+1) H(+)(in) = a plastoquinol + NAD(+) + n H(+)(out). It carries out the reaction a plastoquinone + NADPH + (n+1) H(+)(in) = a plastoquinol + NADP(+) + n H(+)(out). Its function is as follows. NDH-1 shuttles electrons from an unknown electron donor, via FMN and iron-sulfur (Fe-S) centers, to quinones in the respiratory and/or the photosynthetic chain. The immediate electron acceptor for the enzyme in this species is believed to be plastoquinone. Couples the redox reaction to proton translocation, and thus conserves the redox energy in a proton gradient. Cyanobacterial NDH-1 also plays a role in inorganic carbon-concentration. The polypeptide is NAD(P)H-quinone oxidoreductase subunit N (Prochlorococcus marinus (strain AS9601)).